The sequence spans 226 residues: Deoxyribose-phosphate aldolase (226 aa).

The Proton donor/acceptor role is filled by Asp-94. Lys-156 acts as the Schiff-base intermediate with acetaldehyde in catalysis. The Proton donor/acceptor role is filled by Lys-185.

It belongs to the DeoC/FbaB aldolase family. DeoC type 1 subfamily.

It is found in the cytoplasm. It catalyses the reaction 2-deoxy-D-ribose 5-phosphate = D-glyceraldehyde 3-phosphate + acetaldehyde. The protein operates within carbohydrate degradation; 2-deoxy-D-ribose 1-phosphate degradation; D-glyceraldehyde 3-phosphate and acetaldehyde from 2-deoxy-alpha-D-ribose 1-phosphate: step 2/2. Its function is as follows. Catalyzes a reversible aldol reaction between acetaldehyde and D-glyceraldehyde 3-phosphate to generate 2-deoxy-D-ribose 5-phosphate. This chain is Deoxyribose-phosphate aldolase, found in Burkholderia orbicola (strain MC0-3).